The chain runs to 178 residues: ATP-dependent protease subunit HslV (178 aa).

The active site involves threonine 5. 3 residues coordinate Na(+): serine 161, cysteine 164, and threonine 167.

Belongs to the peptidase T1B family. HslV subfamily. As to quaternary structure, a double ring-shaped homohexamer of HslV is capped on each side by a ring-shaped HslU homohexamer. The assembly of the HslU/HslV complex is dependent on binding of ATP.

It localises to the cytoplasm. The enzyme catalyses ATP-dependent cleavage of peptide bonds with broad specificity.. Its activity is regulated as follows. Allosterically activated by HslU binding. Protease subunit of a proteasome-like degradation complex believed to be a general protein degrading machinery. This chain is ATP-dependent protease subunit HslV, found in Syntrophomonas wolfei subsp. wolfei (strain DSM 2245B / Goettingen).